The sequence spans 524 residues: Glutamyl-tRNA(Gln) amidotransferase subunit A, mitochondrial (524 aa).

Residues K76 and S171 each act as charge relay system in the active site. Catalysis depends on S195, which acts as the Acyl-ester intermediate.

This sequence belongs to the amidase family. GatA subfamily. As to quaternary structure, subunit of the heterotrimeric GatCAB amidotransferase (AdT) complex, composed of A (qrsl1), B (gatb) and C (gatc) subunits.

Its subcellular location is the mitochondrion. The catalysed reaction is L-glutamyl-tRNA(Gln) + L-glutamine + ATP + H2O = L-glutaminyl-tRNA(Gln) + L-glutamate + ADP + phosphate + H(+). Allows the formation of correctly charged Gln-tRNA(Gln) through the transamidation of misacylated Glu-tRNA(Gln) in the mitochondria. The reaction takes place in the presence of glutamine and ATP through an activated gamma-phospho-Glu-tRNA(Gln). In Xenopus tropicalis (Western clawed frog), this protein is Glutamyl-tRNA(Gln) amidotransferase subunit A, mitochondrial (qrsl1).